Consider the following 429-residue polypeptide: Enolase (429 aa).

A (2R)-2-phosphoglycerate-binding site is contributed by Gln162. The Proton donor role is filled by Glu204. Residues Asp242, Glu289, and Asp316 each contribute to the Mg(2+) site. Positions 341, 370, 371, and 392 each coordinate (2R)-2-phosphoglycerate. Lys341 serves as the catalytic Proton acceptor.

It belongs to the enolase family. The cofactor is Mg(2+).

The protein resides in the cytoplasm. It is found in the secreted. It localises to the cell surface. The catalysed reaction is (2R)-2-phosphoglycerate = phosphoenolpyruvate + H2O. It participates in carbohydrate degradation; glycolysis; pyruvate from D-glyceraldehyde 3-phosphate: step 4/5. Its function is as follows. Catalyzes the reversible conversion of 2-phosphoglycerate (2-PG) into phosphoenolpyruvate (PEP). It is essential for the degradation of carbohydrates via glycolysis. The chain is Enolase from Flavobacterium psychrophilum (strain ATCC 49511 / DSM 21280 / CIP 103535 / JIP02/86).